Reading from the N-terminus, the 213-residue chain is Probable glutathione S-transferase DHAR1, cytosolic (213 aa).

Glutathione-binding residues include Lys8 and Asp19. Residues Lys8 and Asp19 each coordinate L-ascorbate. A GST N-terminal domain is found at 10 to 89; the sequence is AVGHPDTLGD…VIEEKYPTPS (80 aa). The active-site Nucleophile is Cys20. Residues Lys47, Val60, Ser74, His160, and Trp207 each contribute to the glutathione site. The GST C-terminal domain maps to 73–213; sequence DSDVITQVIE…IAGWAPKVNA (141 aa). Lys210 contributes to the L-ascorbate binding site.

Belongs to the GST superfamily. DHAR family. Monomer.

The protein resides in the cytoplasm. It is found in the cytosol. The enzyme catalyses RX + glutathione = an S-substituted glutathione + a halide anion + H(+). The catalysed reaction is L-dehydroascorbate + 2 glutathione = glutathione disulfide + L-ascorbate. Its function is as follows. Involved in ascorbate homeostasis. Maintains redox pools of ascorbate by recycling dihydroascorbate (DHA) to ascorbate. Involved in scavenging reactive oxygen species (ROS) under oxidative stresses. Possesses dehydroascorbate reductase (DHAR) activity in vitro. May function via a ping-pong reaction mechanism with an electron transfer at the active site. Possesses chaperone-like activity in vitro. The chain is Probable glutathione S-transferase DHAR1, cytosolic from Oryza sativa subsp. japonica (Rice).